We begin with the raw amino-acid sequence, 96 residues long: Small ribosomal subunit protein bS20 (96 aa).

Residues 1–27 (MAKQEVAAKKVKRPTALKRDLQNKKKR) are disordered.

Belongs to the bacterial ribosomal protein bS20 family.

Its function is as follows. Binds directly to 16S ribosomal RNA. This chain is Small ribosomal subunit protein bS20, found in Protochlamydia amoebophila (strain UWE25).